The primary structure comprises 342 residues: Foldase protein PrsA (342 aa).

Positions 1 to 20 (MKKKLILAAAGAMAVFSLAA) are cleaved as a signal peptide. Cysteine 21 carries the N-palmitoyl cysteine lipid modification. Residue cysteine 21 is the site of S-diacylglycerol cysteine attachment. The 94-residue stretch at 142-235 (HPEVEAQIIQ…QTYQTTYYVV (94 aa)) folds into the PpiC domain. Positions 297–342 (MQTESSSASSEKKESKSSDSKTSDTKTSDSEKATDSSSKTTESSSK) are disordered. Basic and acidic residues predominate over residues 306–330 (SEKKESKSSDSKTSDTKTSDSEKAT). Residues 331–342 (DSSSKTTESSSK) are compositionally biased toward low complexity.

It belongs to the PrsA family.

It localises to the cell membrane. It catalyses the reaction [protein]-peptidylproline (omega=180) = [protein]-peptidylproline (omega=0). In terms of biological role, plays a major role in protein secretion by helping the post-translocational extracellular folding of several secreted proteins. The sequence is that of Foldase protein PrsA from Enterococcus faecalis (strain ATCC 700802 / V583).